A 123-amino-acid polypeptide reads, in one-letter code: 1,4-dihydroxy-2-naphthoyl-CoA hydrolase (123 aa).

The active-site Nucleophile or proton acceptor is the Glu46.

This sequence belongs to the thioesterase PaaI family.

It catalyses the reaction 1,4-dihydroxy-2-naphthoyl-CoA + H2O = 1,4-dihydroxy-2-naphthoate + CoA + H(+). The protein operates within quinol/quinone metabolism; menaquinone biosynthesis. Its function is as follows. Catalyzes the hydrolysis of 1,4-dihydroxy-2-naphthoyl-CoA (DHNA-CoA) to 1,4-dihydroxy-2-naphthoate (DHNA) and free coenzyme A. Production of DHNA is required for protection against bacteriolysis in the cytosol of macrophages and tissue-specific virulence in vivo, suggesting that MenI is required to protect the bacteria from killing in the macrophage cytosol. This chain is 1,4-dihydroxy-2-naphthoyl-CoA hydrolase, found in Listeria monocytogenes serotype 1/2a (strain 10403S).